Here is a 200-residue protein sequence, read N- to C-terminus: ATP-dependent Clp protease proteolytic subunit 3 (200 aa).

Ser101 acts as the Nucleophile in catalysis. The active site involves His126.

This sequence belongs to the peptidase S14 family. Fourteen ClpP subunits assemble into 2 heptameric rings which stack back to back to give a disk-like structure with a central cavity, resembling the structure of eukaryotic proteasomes.

It localises to the cytoplasm. The enzyme catalyses Hydrolysis of proteins to small peptides in the presence of ATP and magnesium. alpha-casein is the usual test substrate. In the absence of ATP, only oligopeptides shorter than five residues are hydrolyzed (such as succinyl-Leu-Tyr-|-NHMec, and Leu-Tyr-Leu-|-Tyr-Trp, in which cleavage of the -Tyr-|-Leu- and -Tyr-|-Trp bonds also occurs).. Its function is as follows. Cleaves peptides in various proteins in a process that requires ATP hydrolysis. Has a chymotrypsin-like activity. Plays a major role in the degradation of misfolded proteins. This Synechococcus sp. (strain CC9605) protein is ATP-dependent Clp protease proteolytic subunit 3.